The primary structure comprises 788 residues: MEPGKGRAQPTRQVLLFFVFLGGSLVYSETWSYSIAEEMEVGTFIANVVKDMGLDVEDLVARGARVIFDDYKPYLRLDPQNGDLLLNEQLDREALCDLTEPCILHFQVLFENPLQFFRAELLVKDINDHTPTFLNNHILLKISEGATLGTLFQIDSAQDLDVGKNGVQNYTISPNPHFHLKLRDGDEGRKYPELVLDQSLDREKESQLSLTLTAVDGGSPPRSGTTLINVVVLDINDNAPEFEKPVYEVHVPESSPLDSLIIKASATDLDAGINGELSYSFSHVSRDVRKTFEIHPISGEVYLKAPLDFEIIQSYIINIQAIDGGSLSGKSSILVRVVDVNDNPPEIAMTSLTSPIPENSSPEMVVAVFSIRDQDAGDNGRMVGSIQDNLPFVLKPTFKNFYALVTEHPLDREVRNEYNITITVTDLGTPRLKTQHNITVLVSDVNDNAPAFTQTSYTLFVRENNSPALHIGSVSATDRDSGTNAQVTYSLLPPQDPHLPLASLVSINTDNGHLFALRSLDYEALQAFEFHVGATDRGSPALSSEALVRVLVLDANDNSPFVLYPLQNGSAPCTELVPRAAEPGYLVTKVVAVDGDSGQNAWLSYQLLKATEPGLFGVWAHNGEVRTARLLSERDVAKHRLVVLVKDNGEPPRSATATLQVLLVDGFSQPYLPLPEAAPSQAQADSLTVYLVVALASVSSLFLFSVFLFVAVRLCRRSRAASVGRCSVPEGPFPGHLLDVSGTGTLSQSYQYEVCLTGGSGANEFKFLKPVIPNLLSRDSDMEKAPPF.

The N-terminal stretch at methionine 1–serine 28 is a signal peptide. 5 consecutive Cadherin domains span residues glutamate 29 to phenylalanine 133, leucine 134 to phenylalanine 242, glutamate 243 to isoleucine 347, alanine 348 to phenylalanine 452, and threonine 453 to valine 562. At glutamate 29–leucine 691 the chain is on the extracellular side. Asparagine 169 is a glycosylation site (N-linked (GlcNAc...) asparagine). 2 N-linked (GlcNAc...) asparagine glycosylation sites follow: asparagine 419 and asparagine 437. A glycan (N-linked (GlcNAc...) asparagine) is linked at asparagine 568. In terms of domain architecture, Cadherin 6 spans glycine 569 to leucine 672. A helical membrane pass occupies residues valine 692–valine 712. Residues arginine 713–phenylalanine 788 are Cytoplasmic-facing.

The protein localises to the cell membrane. Potential calcium-dependent cell-adhesion protein. In Pan troglodytes (Chimpanzee), this protein is Protocadherin beta-18 (PCDHB18).